A 95-amino-acid polypeptide reads, in one-letter code: MGNCNRTQKPSSSSNNLEKPPQAAEFRRTAEPSLYGRYNCKCCWFADKNLITCSDHYLCLRCHQIMLRNSELCNICWKPLPTSIRVPLEASAPDL.

The span at 1–17 (MGNCNRTQKPSSSSNNL) shows a compositional bias: polar residues. Residues 1–25 (MGNCNRTQKPSSSSNNLEKPPQAAE) are disordered. Gly2 is lipidated: N-myristoyl glycine; by host. An RING-type; atypical zinc finger spans residues 40-76 (CKCCWFADKNLITCSDHYLCLRCHQIMLRNSELCNIC). The short motif at 90 to 93 (ASAP) is the ASAP motif element.

The protein belongs to the arenaviridae Z protein family. In terms of assembly, interacts with protein NP; this interaction probably directs the encapsidated genome to budding sites. Interacts (via RING domain) with polymerase L; this interaction inhibits viral transcription and replication, Z partially blocks the product exit tunnel for the releasing nascent RNA product. Interacts with the glycoprotein complex; this interaction plays a role in virion budding. Interacts with host eIF4E; this interaction results in eIF4E reduced affinity for its substrate, the 5'-m7 G cap structure. Interacts (via late-budding domain) with host TSG101; this interaction is essential for budding and release of viral particles. Interacts with host RPLP0; this interaction may serve to load ribosome-like particles inside the virion. Interacts with host PML; this interaction induces PML bodies redistribution in the cytoplasm upon viral infection. Myristoylation is required for the role of RING finger protein Z in assembly and budding.

The protein resides in the virion. Its subcellular location is the host cytoplasm. It localises to the host perinuclear region. It is found in the host cell membrane. In terms of biological role, plays a crucial role in virion assembly and budding. Expressed late in the virus life cycle, it acts as an inhibitor of viral transcription and RNA synthesis by interacting with the viral polymerase L. Presumably recruits the NP encapsidated genome to cellular membranes at budding sites via direct interaction with NP. Plays critical roles in the final steps of viral release by interacting with host TSG101, a member of the vacuolar protein-sorting pathway and using other cellular host proteins involved in vesicle formation pathway. The budding of the virus progeny occurs after association of protein Z with the viral glycoprotein complex SSP-GP1-GP2 at the cell periphery, step that requires myristoylation of protein Z. Also selectively represses protein production by associating with host eIF4E. In cell-based minigenome assay, has an inhibitory effect on the ribonucleoprotein machinery (vRNP), which is responsible for the replication and transcription of the viral genome. This Tacaribe virus (strain Franze-Fernandez) (TCRV) protein is RING finger protein Z.